The following is a 141-amino-acid chain: Putative nickel-responsive regulator (141 aa).

Positions 83, 94, 96, and 102 each coordinate Ni(2+).

The protein belongs to the transcriptional regulatory CopG/NikR family. Ni(2+) serves as cofactor.

Transcriptional regulator. The polypeptide is Putative nickel-responsive regulator (Methanopyrus kandleri (strain AV19 / DSM 6324 / JCM 9639 / NBRC 100938)).